The chain runs to 346 residues: Protein RecA (346 aa).

Position 66–73 (66–73 (GPESSGKT)) interacts with ATP.

It belongs to the RecA family.

It localises to the cytoplasm. In terms of biological role, can catalyze the hydrolysis of ATP in the presence of single-stranded DNA, the ATP-dependent uptake of single-stranded DNA by duplex DNA, and the ATP-dependent hybridization of homologous single-stranded DNAs. It interacts with LexA causing its activation and leading to its autocatalytic cleavage. This chain is Protein RecA, found in Aromatoleum aromaticum (strain DSM 19018 / LMG 30748 / EbN1) (Azoarcus sp. (strain EbN1)).